Consider the following 32-residue polypeptide: Ranatuerin-2La (32 aa).

The cysteines at positions 27 and 32 are disulfide-linked.

In terms of tissue distribution, expressed by the skin glands.

It localises to the secreted. In terms of biological role, antibacterial activity against Gram-positive bacterium S.aureus and Gram-negative bacterium E.coli. Weak activity against C.albicans. This is Ranatuerin-2La from Rana luteiventris (Columbia spotted frog).